Here is a 275-residue protein sequence, read N- to C-terminus: Penicillin-insensitive murein endopeptidase (275 aa).

Residues 1–19 (MKNWIVGMVALVTMVPVMA) form the signal peptide. 3 cysteine pairs are disulfide-bonded: cysteine 44–cysteine 264, cysteine 187–cysteine 235, and cysteine 216–cysteine 223. Histidine 110, histidine 113, aspartate 120, aspartate 147, and histidine 211 together coordinate Zn(2+). Residues 227–262 (DTPPPGDGCGAELESWFQPPPPSAKPGKTLPPPLPP) form a disordered region. Residues 244–262 (QPPPPSAKPGKTLPPPLPP) are compositionally biased toward pro residues.

This sequence belongs to the peptidase M74 family. As to quaternary structure, dimer. The cofactor is Zn(2+).

It localises to the periplasm. Functionally, murein endopeptidase that cleaves the D-alanyl-meso-2,6-diamino-pimelyl amide bond that connects peptidoglycan strands. Likely plays a role in the removal of murein from the sacculus. This is Penicillin-insensitive murein endopeptidase from Yersinia pestis.